A 180-amino-acid chain; its full sequence is Cell division protein SepF (180 aa).

Residues 1-66 form a disordered region; it reads MAFSFKSFFG…NRNGFAYDNG (66 aa). The segment covering 12–23 has biased composition (acidic residues); that stretch reads ADDEEEEYEDSG. Residues 24 to 57 are compositionally biased toward low complexity; the sequence is YEQQPNQGQQQPVNSQQQNTSNQSYSGYNNQNQN.

It belongs to the SepF family. As to quaternary structure, homodimer. Interacts with FtsZ.

Its subcellular location is the cytoplasm. Cell division protein that is part of the divisome complex and is recruited early to the Z-ring. Probably stimulates Z-ring formation, perhaps through the cross-linking of FtsZ protofilaments. Its function overlaps with FtsA. In Oenococcus oeni (strain ATCC BAA-331 / PSU-1), this protein is Cell division protein SepF.